A 966-amino-acid polypeptide reads, in one-letter code: Protein mes-1 (966 aa).

A signal peptide spans 1-19 (MKIHHFLTLLCTFLPLTTT). Residues 20–470 (ALTNSTPLSL…QASDIPTSVE (451 aa)) lie on the Extracellular side of the membrane. 6 N-linked (GlcNAc...) asparagine glycosylation sites follow: N62, N126, N183, N214, N251, and N372. A helical transmembrane segment spans residues 471 to 491 (LMAVVLATSAIFALIALFLLY). At 492–966 (RKRKRDKKAR…FKSVNVAATV (475 aa)) the chain is on the cytoplasmic side. A Protein kinase domain is found at 656–966 (HNFNERIEKQ…FKSVNVAATV (311 aa)). ATP is bound by residues 662–670 (IEKQAYWLM) and K685.

The protein belongs to the protein kinase superfamily.

It localises to the cell membrane. Its function is as follows. During early embryogenesis, controls asymmetric cell division and the asymmetric localization of P granules of germline precursor P2 and its descendant P3. Probably upstream of tyrosine kinase src-1, plays a role in endoderm development by controlling spindle orientation during EMS blastomere cell division. Controls EMS spindle orientation probably by promoting lin-5 and gpr-1/2 enrichment at, and let-99 exclusion from the junction between P2 and EMS cells. This Caenorhabditis elegans protein is Protein mes-1.